A 481-amino-acid chain; its full sequence is Zinc finger CCCH domain-containing protein 4 (481 aa).

The C3H1-type zinc finger occupies 157–184 (RNRAHVCSFFIRGECTRGAECPYRHEMP). The 74-residue stretch at 228 to 301 (KTLYVGGLNS…QRLKLTWGRP (74 aa)) folds into the RRM domain. The tract at residues 329-481 (HNQPPPMQQY…DVSTATGSSQ (153 aa)) is disordered. Residues 331–345 (QPPPMQQYYMHPPPA) are compositionally biased toward pro residues. 2 stretches are compositionally biased toward low complexity: residues 369 to 389 (AGGSSTENNGASSSSYMMPPH) and 399 to 410 (YMPSPYQQQYPP). The span at 423–444 (APPPAAYPYPQQPGPGSRPAPS) shows a compositional bias: pro residues. The segment covering 449 to 471 (SAISPDSAPAGSGAPSGSSQQAP) has biased composition (low complexity). A compositionally biased stretch (polar residues) spans 472-481 (DVSTATGSSQ).

This Arabidopsis thaliana (Mouse-ear cress) protein is Zinc finger CCCH domain-containing protein 4.